The sequence spans 105 residues: Small ribosomal subunit protein eS25 (105 aa).

Belongs to the eukaryotic ribosomal protein eS25 family. In terms of assembly, component of the small ribosomal subunit. Mature ribosomes consist of a small (40S) and a large (60S) subunit. The 40S subunit contains about 32 different proteins and 1 molecule of RNA (18S). The 60S subunit contains 45 different proteins and 3 molecules of RNA (25S, 5.8S and 5S).

The protein localises to the cytoplasm. Functionally, component of the ribosome, a large ribonucleoprotein complex responsible for the synthesis of proteins in the cell. The small ribosomal subunit (SSU) binds messenger RNAs (mRNAs) and translates the encoded message by selecting cognate aminoacyl-transfer RNA (tRNA) molecules. The large subunit (LSU) contains the ribosomal catalytic site termed the peptidyl transferase center (PTC), which catalyzes the formation of peptide bonds, thereby polymerizing the amino acids delivered by tRNAs into a polypeptide chain. The nascent polypeptides leave the ribosome through a tunnel in the LSU and interact with protein factors that function in enzymatic processing, targeting, and the membrane insertion of nascent chains at the exit of the ribosomal tunnel. The sequence is that of Small ribosomal subunit protein eS25 (RPS25B) from Candida albicans (strain SC5314 / ATCC MYA-2876) (Yeast).